A 348-amino-acid polypeptide reads, in one-letter code: tRNA N6-adenosine threonylcarbamoyltransferase (348 aa).

Residues His115 and His119 each coordinate Fe cation. Substrate-binding positions include 137-141, Asp170, Gly183, and Asn281; that span reads LASGG. Residue Asp309 participates in Fe cation binding.

This sequence belongs to the KAE1 / TsaD family. Requires Fe(2+) as cofactor.

It is found in the cytoplasm. It carries out the reaction L-threonylcarbamoyladenylate + adenosine(37) in tRNA = N(6)-L-threonylcarbamoyladenosine(37) in tRNA + AMP + H(+). In terms of biological role, required for the formation of a threonylcarbamoyl group on adenosine at position 37 (t(6)A37) in tRNAs that read codons beginning with adenine. Is involved in the transfer of the threonylcarbamoyl moiety of threonylcarbamoyl-AMP (TC-AMP) to the N6 group of A37, together with TsaE and TsaB. TsaD likely plays a direct catalytic role in this reaction. The sequence is that of tRNA N6-adenosine threonylcarbamoyltransferase from Methylobacterium sp. (strain 4-46).